The following is a 68-amino-acid chain: Large ribosomal subunit protein uL29 (68 aa).

This sequence belongs to the universal ribosomal protein uL29 family.

The sequence is that of Large ribosomal subunit protein uL29 from Persephonella marina (strain DSM 14350 / EX-H1).